The following is a 274-amino-acid chain: Thiamine kinase (274 aa).

The protein belongs to the thiamine kinase family.

It catalyses the reaction thiamine + ATP = thiamine phosphate + ADP + H(+). It functions in the pathway cofactor biosynthesis; thiamine diphosphate biosynthesis; thiamine phosphate from thiamine: step 1/1. Functionally, catalyzes the ATP-dependent phosphorylation of thiamine to thiamine phosphate. Is involved in thiamine salvage. The protein is Thiamine kinase of Salmonella dublin (strain CT_02021853).